A 144-amino-acid polypeptide reads, in one-letter code: UPF0102 protein sce2912 (144 aa).

This sequence belongs to the UPF0102 family.

The protein is UPF0102 protein sce2912 of Sorangium cellulosum (strain So ce56) (Polyangium cellulosum (strain So ce56)).